The chain runs to 148 residues: Large ribosomal subunit protein uL16 (148 aa).

It belongs to the universal ribosomal protein uL16 family. As to quaternary structure, part of the 50S ribosomal subunit.

In terms of biological role, binds 23S rRNA and is also seen to make contacts with the A and possibly P site tRNAs. This chain is Large ribosomal subunit protein uL16, found in Gloeobacter violaceus (strain ATCC 29082 / PCC 7421).